A 430-amino-acid chain; its full sequence is Serine/threonine-protein kinase Sgk1 (430 aa).

Positions 1–60 are necessary for localization to the mitochondria; that stretch reads MTVKTEAARSTLTYSRMRGMVAILIAFMKQRRMGLNDFIQKLANNSYACKHPEVQSYLKI. Residues 66–92 are disordered; the sequence is PELMNANPSPPPSPSQQINLGPSSNPH. Position 74 is a phosphoserine (S74). Position 78 is a phosphoserine; by MAPK7 (S78). Residues 81–91 are compositionally biased toward polar residues; it reads QQINLGPSSNP. Positions 98–354 constitute a Protein kinase domain; that stretch reads FHFLKVIGKG…FMEIKSHIFF (257 aa). Residues 104-112 and K127 contribute to the ATP site; that span reads IGKGSFGKV. A Nuclear localization signal motif is present at residues 131–141; that stretch reads KKAILKKKEEK. D222 functions as the Proton acceptor in the catalytic mechanism. T256 is modified (phosphothreonine; by PDPK1). The 76-residue stretch at 355 to 430 folds into the AGC-kinase C-terminal domain; it reads SLINWDDLIN…SYAPPMDSFL (76 aa). Position 368 is a phosphothreonine; by PKA (T368). A phosphoserine mark is found at S396, S400, and S421.

It belongs to the protein kinase superfamily. AGC Ser/Thr protein kinase family. In terms of assembly, homodimer; disulfide-linked. Forms a trimeric complex with FBXW7 and NOTCH1. Interacts with MAPK3/ERK1, MAPK1/ERK2, MAP2K1/MEK1, MAP2K2/MEK2, NEDD4, NEDD4L, MAPK7, CREB1, SLC9A3R2/NHERF2 and KCNJ1/ROMK1. Associates with the mammalian target of rapamycin complex 2 (mTORC2) via an interaction with MAPKAP1/SIN1. Interacts with MAPT/TAU. Regulated by phosphorylation. Activated by phosphorylation on Ser-421 by mTORC2, transforming it into a substrate for PDPK1 which phosphorylates it on Thr-256. Phosphorylation on Ser-396 and Ser-400 are also essential for its activity. Phosphorylation on Ser-78 by MAPK7 is required for growth factor-induced cell cycle progression. In terms of processing, ubiquitinated by NEDD4L; which promotes proteasomal degradation. Ubiquitinated by SYVN1 at the endoplasmic reticulum; which promotes rapid proteasomal degradation and maintains a high turnover rate in resting cells. Expressed in most tissues with highest levels in the ovary, thymus and lung. In the kidney, expressed within glomeruli of the cortex, at low levels in outer medulla and moderate levels in inner medulla and papilla.

Its subcellular location is the cytoplasm. It localises to the nucleus. It is found in the endoplasmic reticulum membrane. The protein resides in the cell membrane. The protein localises to the mitochondrion. It carries out the reaction L-seryl-[protein] + ATP = O-phospho-L-seryl-[protein] + ADP + H(+). It catalyses the reaction L-threonyl-[protein] + ATP = O-phospho-L-threonyl-[protein] + ADP + H(+). Its activity is regulated as follows. Two specific sites, one in the kinase domain (Thr-256) and the other in the C-terminal regulatory region (Ser-421), need to be phosphorylated for its full activation. Phosphorylation at Ser-396 and Ser-400 are also essential for its activity. Activated by WNK1, WNK2, WNK3 and WNK4. Its function is as follows. Serine/threonine-protein kinase which is involved in the regulation of a wide variety of ion channels, membrane transporters, cellular enzymes, transcription factors, neuronal excitability, cell growth, proliferation, survival, migration and apoptosis. Plays an important role in cellular stress response. Contributes to regulation of renal Na(+) retention, renal K(+) elimination, salt appetite, gastric acid secretion, intestinal Na(+)/H(+) exchange and nutrient transport, insulin-dependent salt sensitivity of blood pressure, salt sensitivity of peripheral glucose uptake, cardiac repolarization and memory consolidation. Up-regulates Na(+) channels: SCNN1A/ENAC, SCN5A and ASIC1/ACCN2, K(+) channels: KCNJ1/ROMK1, KCNA1-5, KCNQ1-5 and KCNE1, epithelial Ca(2+) channels: TRPV5 and TRPV6, chloride channels: BSND, CLCN2 and CFTR, glutamate transporters: SLC1A3/EAAT1, SLC1A2 /EAAT2, SLC1A1/EAAT3, SLC1A6/EAAT4 and SLC1A7/EAAT5, amino acid transporters: SLC1A5/ASCT2, SLC38A1/SN1 and SLC6A19, creatine transporter: SLC6A8, Na(+)/dicarboxylate cotransporter: SLC13A2/NADC1, Na(+)-dependent phosphate cotransporter: SLC34A2/NAPI-2B, glutamate receptor: GRIK2/GLUR6. Up-regulates carriers: SLC9A3/NHE3, SLC12A1/NKCC2, SLC12A3/NCC, SLC5A3/SMIT, SLC2A1/GLUT1, SLC5A1/SGLT1 and SLC15A2/PEPT2. Regulates enzymes: GSK3A/B, PMM2 and Na(+)/K(+) ATPase, and transcription factors: CTNNB1 and nuclear factor NF-kappa-B. Stimulates sodium transport into epithelial cells by enhancing the stability and expression of SCNN1A/ENAC. This is achieved by phosphorylating the NEDD4L ubiquitin E3 ligase, promoting its interaction with 14-3-3 proteins, thereby preventing it from binding to SCNN1A/ENAC and targeting it for degradation. Regulates store-operated Ca(+2) entry (SOCE) by stimulating ORAI1 and STIM1. Regulates KCNJ1/ROMK1 directly via its phosphorylation or indirectly via increased interaction with SLC9A3R2/NHERF2. Phosphorylates MDM2 and activates MDM2-dependent ubiquitination of p53/TP53. Phosphorylates SLC2A4/GLUT4 and up-regulates its activity. Phosphorylates APBB1/FE65 and promotes its localization to the nucleus. Phosphorylates FBXW7 and plays an inhibitory role in the NOTCH1 signaling. Phosphorylates FOXO1 resulting in its relocalization from the nucleus to the cytoplasm. Phosphorylates FOXO3, promoting its exit from the nucleus and interference with FOXO3-dependent transcription. Phosphorylates BRAF and MAP3K3/MEKK3 and inhibits their activity. Phosphorylates SLC9A3/NHE3 in response to dexamethasone, resulting in its activation and increased localization at the cell membrane. Phosphorylates CREB1. Necessary for vascular remodeling during angiogenesis. Phosphorylates MAPT/TAU and mediates microtubule depolymerization and neurite formation in hippocampal neurons. Phosphorylates MAPK1/ERK2 and activates it by enhancing its interaction with MAP2K1/MEK1 and MAP2K2/MEK2. May also play an important role in the development of particular groups of neurons in the postnatal brain. The chain is Serine/threonine-protein kinase Sgk1 (Sgk1) from Rattus norvegicus (Rat).